A 750-amino-acid chain; its full sequence is Photosystem I P700 chlorophyll a apoprotein A1 (750 aa).

The next 8 helical transmembrane spans lie at 70 to 93 (VFSA…FHGA), 156 to 179 (LYCT…FHYH), 195 to 219 (LNHH…HVSL), 291 to 309 (IAHH…GHMY), 346 to 369 (WHAQ…HHMY), 385 to 411 (LSLF…IFMV), 433 to 455 (AIIS…LYIH), and 531 to 549 (FLVH…LILL). Residues Cys573 and Cys582 each coordinate [4Fe-4S] cluster. 2 helical membrane-spanning segments follow: residues 589 to 610 (HVFL…HFSW) and 664 to 686 (LSAY…MFLF). Chlorophyll a' is bound at residue His675. Residues Met683 and Tyr691 each contribute to the chlorophyll a site. Trp692 is a binding site for phylloquinone. The helical transmembrane segment at 724–744 (AVGVTHYLLGGIATTWAFFLA) threads the bilayer.

It belongs to the PsaA/PsaB family. As to quaternary structure, the PsaA/B heterodimer binds the P700 chlorophyll special pair and subsequent electron acceptors. PSI consists of a core antenna complex that captures photons, and an electron transfer chain that converts photonic excitation into a charge separation. The eukaryotic PSI reaction center is composed of at least 11 subunits. P700 is a chlorophyll a/chlorophyll a' dimer, A0 is one or more chlorophyll a, A1 is one or both phylloquinones and FX is a shared 4Fe-4S iron-sulfur center. serves as cofactor.

It localises to the plastid. The protein localises to the chloroplast thylakoid membrane. The enzyme catalyses reduced [plastocyanin] + hnu + oxidized [2Fe-2S]-[ferredoxin] = oxidized [plastocyanin] + reduced [2Fe-2S]-[ferredoxin]. Its function is as follows. PsaA and PsaB bind P700, the primary electron donor of photosystem I (PSI), as well as the electron acceptors A0, A1 and FX. PSI is a plastocyanin-ferredoxin oxidoreductase, converting photonic excitation into a charge separation, which transfers an electron from the donor P700 chlorophyll pair to the spectroscopically characterized acceptors A0, A1, FX, FA and FB in turn. Oxidized P700 is reduced on the lumenal side of the thylakoid membrane by plastocyanin. The protein is Photosystem I P700 chlorophyll a apoprotein A1 of Nasturtium officinale (Watercress).